The chain runs to 271 residues: Phosphatidylglycerol--prolipoprotein diacylglyceryl transferase (271 aa).

7 helical membrane passes run 21 to 41 (LAVRWYGLMYLVGFLFAMWLA), 60 to 80 (LLFAGFLGVVIGGRVGYVIFY), 95 to 115 (VWTGGMSFHGGLLGVITAMFW), 124 to 144 (FFGVADFVAPLVPFGLGMGRI), 177 to 197 (QLYEFALEGVVLFFILNWFIG), 203 to 223 (GSVSGLFLAGYGTFRFLVEYV), and 236 to 256 (FISMGQILSLPMVIIGILMMV). Arg143 is an a 1,2-diacyl-sn-glycero-3-phospho-(1'-sn-glycerol) binding site.

Belongs to the Lgt family.

It is found in the cell inner membrane. The enzyme catalyses L-cysteinyl-[prolipoprotein] + a 1,2-diacyl-sn-glycero-3-phospho-(1'-sn-glycerol) = an S-1,2-diacyl-sn-glyceryl-L-cysteinyl-[prolipoprotein] + sn-glycerol 1-phosphate + H(+). Its pathway is protein modification; lipoprotein biosynthesis (diacylglyceryl transfer). Functionally, catalyzes the transfer of the diacylglyceryl group from phosphatidylglycerol to the sulfhydryl group of the N-terminal cysteine of a prolipoprotein, the first step in the formation of mature lipoproteins. This is Phosphatidylglycerol--prolipoprotein diacylglyceryl transferase from Vibrio cholerae serotype O1 (strain ATCC 39541 / Classical Ogawa 395 / O395).